We begin with the raw amino-acid sequence, 532 residues long: CTP synthase (532 aa).

The amidoligase domain stretch occupies residues 1 to 265 (MKYIVVTGGV…DEYLMRKLNL (265 aa)). Serine 12 serves as a coordination point for CTP. Serine 12 provides a ligand contact to UTP. ATP is bound by residues 13 to 18 (GLGKGI) and aspartate 70. Residues aspartate 70 and glutamate 140 each coordinate Mg(2+). Residues 147–149 (DIE), 186–191 (KTKPTQ), and lysine 222 each bind CTP. UTP-binding positions include 186-191 (KTKPTQ) and lysine 222. The Glutamine amidotransferase type-1 domain maps to 289–529 (SIAIVGKYVD…VRAALKYRRE (241 aa)). Glycine 349 is a binding site for L-glutamine. Catalysis depends on cysteine 376, which acts as the Nucleophile; for glutamine hydrolysis. L-glutamine-binding positions include 377-380 (FGFQ), glutamate 400, and arginine 457. Catalysis depends on residues histidine 502 and glutamate 504.

Belongs to the CTP synthase family. As to quaternary structure, homotetramer.

It carries out the reaction UTP + L-glutamine + ATP + H2O = CTP + L-glutamate + ADP + phosphate + 2 H(+). It catalyses the reaction L-glutamine + H2O = L-glutamate + NH4(+). The catalysed reaction is UTP + NH4(+) + ATP = CTP + ADP + phosphate + 2 H(+). It participates in pyrimidine metabolism; CTP biosynthesis via de novo pathway; CTP from UDP: step 2/2. Allosterically activated by GTP, when glutamine is the substrate; GTP has no effect on the reaction when ammonia is the substrate. The allosteric effector GTP functions by stabilizing the protein conformation that binds the tetrahedral intermediate(s) formed during glutamine hydrolysis. Inhibited by the product CTP, via allosteric rather than competitive inhibition. Its function is as follows. Catalyzes the ATP-dependent amination of UTP to CTP with either L-glutamine or ammonia as the source of nitrogen. Regulates intracellular CTP levels through interactions with the four ribonucleotide triphosphates. The protein is CTP synthase of Archaeoglobus fulgidus (strain ATCC 49558 / DSM 4304 / JCM 9628 / NBRC 100126 / VC-16).